We begin with the raw amino-acid sequence, 103 residues long: Small ribosomal subunit protein uS10 (103 aa).

This sequence belongs to the universal ribosomal protein uS10 family. In terms of assembly, part of the 30S ribosomal subunit.

Involved in the binding of tRNA to the ribosomes. This chain is Small ribosomal subunit protein uS10, found in Shewanella frigidimarina (strain NCIMB 400).